A 313-amino-acid polypeptide reads, in one-letter code: tRNA (guanine-N(7)-)-methyltransferase (313 aa).

Residues glutamate 33, glutamate 58, and aspartate 85 each contribute to the S-adenosyl-L-methionine site. Substrate-binding positions include lysine 112, aspartate 144, and 177–180; that span reads TRYE.

This sequence belongs to the class I-like SAM-binding methyltransferase superfamily. TrmB family.

The enzyme catalyses guanosine(46) in tRNA + S-adenosyl-L-methionine = N(7)-methylguanosine(46) in tRNA + S-adenosyl-L-homocysteine. Its pathway is tRNA modification; N(7)-methylguanine-tRNA biosynthesis. Functionally, catalyzes the formation of N(7)-methylguanine at position 46 (m7G46) in tRNA. The polypeptide is tRNA (guanine-N(7)-)-methyltransferase (Thermotoga maritima (strain ATCC 43589 / DSM 3109 / JCM 10099 / NBRC 100826 / MSB8)).